The chain runs to 197 residues: Holliday junction branch migration complex subunit RuvA (197 aa).

The tract at residues M1–L64 is domain I. The tract at residues R65 to T143 is domain II. Positions G144–L153 are flexible linker. Residues L153–R197 are domain III.

It belongs to the RuvA family. Homotetramer. Forms an RuvA(8)-RuvB(12)-Holliday junction (HJ) complex. HJ DNA is sandwiched between 2 RuvA tetramers; dsDNA enters through RuvA and exits via RuvB. An RuvB hexamer assembles on each DNA strand where it exits the tetramer. Each RuvB hexamer is contacted by two RuvA subunits (via domain III) on 2 adjacent RuvB subunits; this complex drives branch migration. In the full resolvosome a probable DNA-RuvA(4)-RuvB(12)-RuvC(2) complex forms which resolves the HJ.

The protein resides in the cytoplasm. The RuvA-RuvB-RuvC complex processes Holliday junction (HJ) DNA during genetic recombination and DNA repair, while the RuvA-RuvB complex plays an important role in the rescue of blocked DNA replication forks via replication fork reversal (RFR). RuvA specifically binds to HJ cruciform DNA, conferring on it an open structure. The RuvB hexamer acts as an ATP-dependent pump, pulling dsDNA into and through the RuvAB complex. HJ branch migration allows RuvC to scan DNA until it finds its consensus sequence, where it cleaves and resolves the cruciform DNA. The chain is Holliday junction branch migration complex subunit RuvA from Stenotrophomonas maltophilia (strain K279a).